A 650-amino-acid polypeptide reads, in one-letter code: Aminopeptidase B (650 aa).

At Ser7 the chain carries Phosphoserine. Residue 298-302 (GGMEN) coordinates substrate. A Zn(2+)-binding site is contributed by His325. Glu326 serves as the catalytic Proton acceptor. Residues His329 and Glu348 each coordinate Zn(2+). The residue at position 446 (Lys446) is an N6-acetyllysine.

This sequence belongs to the peptidase M1 family. Monomer. It depends on Zn(2+) as a cofactor. In terms of tissue distribution, widely expressed.

The protein localises to the secreted. The catalysed reaction is Release of N-terminal Arg and Lys from oligopeptides when P1' is not Pro. Also acts on arylamides of Arg and Lys.. Exopeptidase which selectively removes arginine and/or lysine residues from the N-terminus of several peptide substrates including Arg(0)-Leu-enkephalin, Arg(0)-Met-enkephalin and Arg(-1)-Lys(0)-somatostatin-14. Can hydrolyze leukotriene A4 (LTA-4) into leukotriene B4 (LTB-4). This is Aminopeptidase B (Rnpep) from Rattus norvegicus (Rat).